Consider the following 59-residue polypeptide: Large ribosomal subunit protein uL30 (59 aa).

This sequence belongs to the universal ribosomal protein uL30 family. In terms of assembly, part of the 50S ribosomal subunit.

In Alkaliphilus metalliredigens (strain QYMF), this protein is Large ribosomal subunit protein uL30.